We begin with the raw amino-acid sequence, 1877 residues long: Protein TIC 214 (1877 aa).

The next 6 helical transmembrane spans lie at 18–38 (IINS…FSVG), 64–84 (FITG…HLAL), 87–107 (PHTI…WKNH), 124–144 (LSIQ…HFIL), 172–192 (VGWL…LFWI), and 221–241 (IFRI…PSPI). 3 disordered regions span residues 246–313 (LKET…GKEK), 644–695 (DDFE…NSDR), and 774–795 (PEFK…QKKE). Composition is skewed to acidic residues over residues 251–268 (ETEE…EIET), 281–304 (GSTE…DETE), and 645–659 (DFEE…ESTE). Residues 685–695 (TSTKDTTNSDR) are compositionally biased toward basic and acidic residues.

The protein belongs to the TIC214 family. As to quaternary structure, part of the Tic complex.

It is found in the plastid. It localises to the chloroplast inner membrane. Functionally, involved in protein precursor import into chloroplasts. May be part of an intermediate translocation complex acting as a protein-conducting channel at the inner envelope. The polypeptide is Protein TIC 214 (Chloranthus spicatus (Chulantree)).